The following is a 187-amino-acid chain: Orotate phosphoribosyltransferase (187 aa).

Residues Arg-99, Lys-100, Lys-103, His-105, and Asp-125–Ser-133 contribute to the 5-phospho-alpha-D-ribose 1-diphosphate site. Orotate is bound by residues Thr-129 and Arg-157.

The protein belongs to the purine/pyrimidine phosphoribosyltransferase family. PyrE subfamily. As to quaternary structure, homodimer. It depends on Mg(2+) as a cofactor.

The enzyme catalyses orotidine 5'-phosphate + diphosphate = orotate + 5-phospho-alpha-D-ribose 1-diphosphate. It participates in pyrimidine metabolism; UMP biosynthesis via de novo pathway; UMP from orotate: step 1/2. Catalyzes the transfer of a ribosyl phosphate group from 5-phosphoribose 1-diphosphate to orotate, leading to the formation of orotidine monophosphate (OMP). The chain is Orotate phosphoribosyltransferase from Leptospira borgpetersenii serovar Hardjo-bovis (strain L550).